The sequence spans 300 residues: Iron-dependent extradiol dioxygenase (300 aa).

2 VOC domains span residues 5 to 120 and 142 to 270; these read SLAY…AFHG and GLGH…FGCE. Residue histidine 145 participates in Fe cation binding. Substrate contacts are provided by histidine 200, histidine 215, aspartate 250, and tyrosine 256. Histidine 215 serves as a coordination point for Fe cation. Glutamate 266 is a Fe cation binding site.

Belongs to the extradiol ring-cleavage dioxygenase family. Homodimer. Fe(2+) serves as cofactor.

The catalysed reaction is 3,4-dihydroxy-9,10-secoandrosta-1,3,5(10)-triene-9,17-dione + O2 = (1E,2Z)-3-hydroxy-5,9,17-trioxo-4,5:9,10-disecoandrosta-1(10),2-dien-4-oate + H(+). Its pathway is steroid metabolism; cholesterol metabolism. Its function is as follows. Catalyzes the meta-cleavage of 3,4-dihydroxy-9,10-seconandrost-1,3,5(10)-triene-9,17-dione (3,4-DHSA) to produce 4,5-9,10-diseco-3-hydroxy-5,9,17-trioxoandrosta-1(10),2-diene-4-oic acid (4,9-DSHA). Also involved in biphenyl and polychlorinated biphenyls (PCBs) degradation. The protein is Iron-dependent extradiol dioxygenase (hsaC) of Rhodococcus jostii (strain RHA1).